Consider the following 317-residue polypeptide: Single myb histone 6 (317 aa).

Residues 1–61 (MGAPKQRWTS…KWRNMNVIVS (61 aa)) form the HTH myb-type domain. Positions 28–57 (WRTILKDPEFSSTLCYRSNVDLKDKWRNMN) form a DNA-binding region, H-T-H motif. In terms of domain architecture, H15 spans 121-189 (KSHRLDNIIM…KVNRKYRIAP (69 aa)). The stretch at 244–288 (VAAARAVAEAEAIMAEAEAAAKEAEAAEAEAQAAQAFAEAAFLTL) forms a coiled coil.

The protein belongs to the histone H1/H5 family. SMH subfamily. In terms of assembly, forms a homodimer and heterodimers.

The protein localises to the nucleus. The protein resides in the chromosome. It localises to the nucleolus. Its subcellular location is the telomere. Binds preferentially double-stranded telomeric repeats, but may also bind to the single telomeric strand. In Zea mays (Maize), this protein is Single myb histone 6 (SMH6).